Consider the following 180-residue polypeptide: ATP-dependent protease subunit HslV (180 aa).

Thr5 is a catalytic residue. 3 residues coordinate Na(+): Gly161, Cys164, and Thr167.

This sequence belongs to the peptidase T1B family. HslV subfamily. As to quaternary structure, a double ring-shaped homohexamer of HslV is capped on each side by a ring-shaped HslU homohexamer. The assembly of the HslU/HslV complex is dependent on binding of ATP.

The protein localises to the cytoplasm. It carries out the reaction ATP-dependent cleavage of peptide bonds with broad specificity.. Allosterically activated by HslU binding. Its function is as follows. Protease subunit of a proteasome-like degradation complex believed to be a general protein degrading machinery. The chain is ATP-dependent protease subunit HslV from Campylobacter jejuni subsp. doylei (strain ATCC BAA-1458 / RM4099 / 269.97).